The following is a 144-amino-acid chain: HTH-type transcriptional repressor NsrR (144 aa).

Residues 2–129 (QLTSFTDYGL…DKHTLLSLID (128 aa)) enclose the HTH rrf2-type domain. Residues 28–51 (ISKVTEVYGVSRNHMVKIINKLGQ) constitute a DNA-binding region (H-T-H motif). 3 residues coordinate [2Fe-2S] cluster: Cys91, Cys96, and Cys102.

[2Fe-2S] cluster is required as a cofactor.

Its function is as follows. Nitric oxide-sensitive repressor of genes involved in protecting the cell against nitrosative stress. May require iron for activity. This Photobacterium profundum (strain SS9) protein is HTH-type transcriptional repressor NsrR.